The sequence spans 311 residues: uncharacterized protein (311 aa).

The segment covering 1-12 has biased composition (polar residues); it reads MPATDTNSTHTT. Disordered regions lie at residues 1–44 and 205–268; these read MPAT…DEEH and ERPS…ATVH. Residues 35-44 are compositionally biased toward basic and acidic residues; that stretch reads TSDKHADEEH.

Belongs to the HHV-5 HKLF1 family.

This is an uncharacterized protein from Human cytomegalovirus (strain AD169) (HHV-5).